Here is an 88-residue protein sequence, read N- to C-terminus: Sec-independent protein translocase protein TatA (88 aa).

Residues 1–21 traverse the membrane as a helical segment; it reads MGGISITQLLIIASIVVVLFG. The disordered stretch occupies residues 39–88; it reads FKKSMSEDDNTTSTSSDKSSQDADFTAPPIEPKANLACPDEAKNKDKEHV. Residues 49-62 show a composition bias toward low complexity; the sequence is TTSTSSDKSSQDAD. Residues 78–88 are compositionally biased toward basic and acidic residues; the sequence is DEAKNKDKEHV.

Belongs to the TatA/E family. In terms of assembly, the Tat system comprises two distinct complexes: a TatABC complex, containing multiple copies of TatA, TatB and TatC subunits, and a separate TatA complex, containing only TatA subunits. Substrates initially bind to the TatABC complex, which probably triggers association of the separate TatA complex to form the active translocon.

It localises to the cell inner membrane. Part of the twin-arginine translocation (Tat) system that transports large folded proteins containing a characteristic twin-arginine motif in their signal peptide across membranes. TatA could form the protein-conducting channel of the Tat system. This Sodalis glossinidius (strain morsitans) protein is Sec-independent protein translocase protein TatA.